The following is a 355-amino-acid chain: UDP-N-acetylglucosamine--N-acetylmuramyl-(pentapeptide) pyrophosphoryl-undecaprenol N-acetylglucosamine transferase (355 aa).

Residues 12–14 (TGG), N124, R163, S191, I243, 262–267 (ALTVAE), and Q288 each bind UDP-N-acetyl-alpha-D-glucosamine.

It belongs to the glycosyltransferase 28 family. MurG subfamily.

Its subcellular location is the cell inner membrane. It catalyses the reaction di-trans,octa-cis-undecaprenyl diphospho-N-acetyl-alpha-D-muramoyl-L-alanyl-D-glutamyl-meso-2,6-diaminopimeloyl-D-alanyl-D-alanine + UDP-N-acetyl-alpha-D-glucosamine = di-trans,octa-cis-undecaprenyl diphospho-[N-acetyl-alpha-D-glucosaminyl-(1-&gt;4)]-N-acetyl-alpha-D-muramoyl-L-alanyl-D-glutamyl-meso-2,6-diaminopimeloyl-D-alanyl-D-alanine + UDP + H(+). Its pathway is cell wall biogenesis; peptidoglycan biosynthesis. Cell wall formation. Catalyzes the transfer of a GlcNAc subunit on undecaprenyl-pyrophosphoryl-MurNAc-pentapeptide (lipid intermediate I) to form undecaprenyl-pyrophosphoryl-MurNAc-(pentapeptide)GlcNAc (lipid intermediate II). The chain is UDP-N-acetylglucosamine--N-acetylmuramyl-(pentapeptide) pyrophosphoryl-undecaprenol N-acetylglucosamine transferase from Tolumonas auensis (strain DSM 9187 / NBRC 110442 / TA 4).